The following is a 502-amino-acid chain: Maturase K (502 aa).

This sequence belongs to the intron maturase 2 family. MatK subfamily.

The protein localises to the plastid. The protein resides in the chloroplast. Functionally, usually encoded in the trnK tRNA gene intron. Probably assists in splicing its own and other chloroplast group II introns. The sequence is that of Maturase K from Fremontodendron californicum (California flannelbush).